We begin with the raw amino-acid sequence, 223 residues long: UPF0441 protein YgiB (223 aa).

Residues threonine 178 to threonine 195 show a composition bias toward low complexity. The interval threonine 178–glycine 223 is disordered. Residues alanine 204–glycine 223 show a composition bias toward polar residues.

This sequence belongs to the UPF0441 family.

This chain is UPF0441 protein YgiB, found in Salmonella heidelberg (strain SL476).